We begin with the raw amino-acid sequence, 202 residues long: Recombination protein RecR (202 aa).

The C4-type zinc-finger motif lies at 57–72 (CGVCRTFTEQPCCDIC). The Toprim domain occupies 81-176 (GQICVVESPS…STTKIAHGVP (96 aa)).

This sequence belongs to the RecR family.

In terms of biological role, may play a role in DNA repair. It seems to be involved in an RecBC-independent recombinational process of DNA repair. It may act with RecF and RecO. The sequence is that of Recombination protein RecR from Hamiltonella defensa subsp. Acyrthosiphon pisum (strain 5AT).